The sequence spans 418 residues: Putative FBD-associated F-box protein At5g56560 (418 aa).

The region spanning Gln-4–Phe-60 is the F-box domain. The region spanning Leu-340–Thr-390 is the FBD domain.

The protein is Putative FBD-associated F-box protein At5g56560 of Arabidopsis thaliana (Mouse-ear cress).